We begin with the raw amino-acid sequence, 320 residues long: Olfactory receptor 12D1 (320 aa).

The Extracellular segment spans residues methionine 1–proline 23. An N-linked (GlcNAc...) asparagine glycan is attached at asparagine 3. The chain crosses the membrane as a helical span at residues phenylalanine 24–leucine 44. At methionine 45–serine 55 the chain is on the cytoplasmic side. The chain crosses the membrane as a helical span at residues proline 56–leucine 76. Over proline 77–serine 97 the chain is Extracellular. A disulfide bridge links cysteine 95 with cysteine 177. A helical membrane pass occupies residues glutamine 98–phenylalanine 118. Topologically, residues aspartate 119–glutamine 141 are cytoplasmic. Residues methionine 142 to serine 162 form a helical membrane-spanning segment. Residues arginine 163–threonine 203 lie on the Extracellular side of the membrane. The chain crosses the membrane as a helical span at residues isoleucine 204 to phenylalanine 224. Residues phenylalanine 225–serine 238 lie on the Cytoplasmic side of the membrane. A helical transmembrane segment spans residues threonine 239 to isoleucine 259. The Extracellular segment spans residues histidine 260–aspartate 270. The helical transmembrane segment at arginine 271–leucine 291 threads the bilayer. Topologically, residues arginine 292–alanine 320 are cytoplasmic.

Belongs to the G-protein coupled receptor 1 family.

The protein localises to the cell membrane. Functionally, odorant receptor. The sequence is that of Olfactory receptor 12D1 (OR12D1) from Homo sapiens (Human).